Here is a 260-residue protein sequence, read N- to C-terminus: Flavin-dependent thymidylate synthase (260 aa).

The 202-residue stretch at 2–203 (ISVKLVSYTN…PRLFKYTGPN (202 aa)) folds into the ThyX domain. Residues serine 56, 80 to 82 (RHR), and glutamine 88 each bind FAD. DUMP is bound by residues 77-80 (QLVR), 88-92 (QMSHR), and arginine 142. A ThyX motif motif is present at residues 80-90 (RHRIASYTQMS). Residues 158-160 (NAR) and asparagine 164 each bind FAD. Arginine 169 serves as a coordination point for dUMP. Arginine 169 serves as the catalytic Involved in ionization of N3 of dUMP, leading to its activation.

Belongs to the thymidylate synthase ThyX family. In terms of assembly, homotetramer. It depends on FAD as a cofactor.

The catalysed reaction is dUMP + (6R)-5,10-methylene-5,6,7,8-tetrahydrofolate + NADPH + H(+) = dTMP + (6S)-5,6,7,8-tetrahydrofolate + NADP(+). Its pathway is pyrimidine metabolism; dTTP biosynthesis. In terms of biological role, catalyzes the reductive methylation of 2'-deoxyuridine-5'-monophosphate (dUMP) to 2'-deoxythymidine-5'-monophosphate (dTMP) while utilizing 5,10-methylenetetrahydrofolate (mTHF) as the methyl donor, and NADPH and FADH(2) as the reductant. The protein is Flavin-dependent thymidylate synthase of Saccharolobus solfataricus (strain ATCC 35092 / DSM 1617 / JCM 11322 / P2) (Sulfolobus solfataricus).